The sequence spans 1188 residues: F-box only protein 38 (1188 aa).

The F-box domain maps to 30-75; sequence MNQLSHEVLCHIFRYLPLQDIMCMECLSRKLKEAVTLYLRVVRVVD. The tract at residues 59 to 119 is interaction with KLF7; it reads KLKEAVTLYL…LHPRYLERRR (61 aa). Short sequence motifs (nuclear export signal) lie at residues 194-201, 307-316, and 451-460; these read LHLVGVNV, LEVDLGYLII, and LLPSLEFISL. The interval 487 to 526 is disordered; sequence ALVSNQNSNNDDNNAQNNNANIHDNNHHHPDDSDEENDFR. The span at 491–509 shows a compositional bias: low complexity; the sequence is NQNSNNDDNNAQNNNANIH. Thr-591 is modified (phosphothreonine). 3 positions are modified to phosphoserine: Ser-598, Ser-600, and Ser-606. Disordered stretches follow at residues 620-666, 685-766, and 787-909; these read RRYS…FPLE, MKAA…MEEG, and RTSR…STSD. Basic and acidic residues-rich tracts occupy residues 621–630 and 685–699; these read RYSEREEKTG and MKAA…KNKD. Positions 703 to 740 are enriched in polar residues; that stretch reads SCSSTTASTVGNSSSHNTASQSPDFVRTVNSGGSSEPS. Phosphoserine occurs at positions 736 and 740. The span at 787–798 shows a compositional bias: basic and acidic residues; that stretch reads RTSRCSDEERPS. The span at 849–861 shows a compositional bias: polar residues; it reads SSQPESCDVQSNE. Positions 889-900 are enriched in basic residues; the sequence is TKPRHAMKRKRT. The Nuclear localization signal motif lies at 896 to 899; the sequence is KRKR.

In terms of assembly, part of the SCF (SKP1-CUL1-F-box) E3 ubiquitin-protein ligase complex SCF(FBXO38) composed of CUL1, SKP1, RBX1 and FBXO38. Interacts with KLF7. Interacts with PDCD1/PD-1.

The protein localises to the cytoplasm. It is found in the cytosol. The protein resides in the nucleus. The protein operates within protein modification; protein ubiquitination. Its function is as follows. Substrate recognition component of a SCF (SKP1-CUL1-F-box protein) E3 ubiquitin-protein ligase complex which mediates the ubiquitination and subsequent proteasomal degradation of PDCD1/PD-1, thereby regulating T-cells-mediated immunity. Required for anti-tumor activity of T-cells by promoting the degradation of PDCD1/PD-1; the PDCD1-mediated inhibitory pathway being exploited by tumors to attenuate anti-tumor immunity and facilitate tumor survival. May indirectly stimulate the activity of transcription factor KLF7, a regulator of neuronal differentiation, without promoting KLF7 ubiquitination. This is F-box only protein 38 from Homo sapiens (Human).